Here is a 257-residue protein sequence, read N- to C-terminus: Ribonuclease HII (257 aa).

The RNase H type-2 domain occupies 72 to 257 (TYIAGIDEVG…FAPIKDMIQK (186 aa)). The a divalent metal cation site is built by D78, E79, and D170.

The protein belongs to the RNase HII family. Mn(2+) serves as cofactor. The cofactor is Mg(2+).

The protein resides in the cytoplasm. The catalysed reaction is Endonucleolytic cleavage to 5'-phosphomonoester.. Functionally, endonuclease that specifically degrades the RNA of RNA-DNA hybrids. The chain is Ribonuclease HII from Bacillus cereus (strain AH820).